The primary structure comprises 183 residues: Ras-related protein Rap-2c (183 aa).

Residue 10–17 (GSGGVGKS) coordinates GTP. The Effector region motif lies at 32 to 40 (YDPTIEDFY). Residues 57–61 (DTAGT) and 116–119 (NKVD) each bind GTP. S-palmitoyl cysteine attachment occurs at residues Cys-176 and Cys-177. The residue at position 180 (Cys-180) is a Cysteine methyl ester. Cys-180 is lipidated: S-geranylgeranyl cysteine. Positions 181 to 183 (VVQ) are cleaved as a propeptide — removed in mature form.

This sequence belongs to the small GTPase superfamily. Ras family. Post-translationally, palmitoylated. Palmitoylation is required for association with recycling endosome membranes and activation of TNIK.

The protein localises to the cytoplasm. The protein resides in the recycling endosome membrane. It carries out the reaction GTP + H2O = GDP + phosphate + H(+). Functionally, small GTP-binding protein which cycles between a GDP-bound inactive and a GTP-bound active form. May play a role in cytoskeletal rearrangements and regulate cell spreading through activation of the effector TNIK. May play a role in SRE-mediated gene transcription. This is Ras-related protein Rap-2c (RAP2C) from Bos taurus (Bovine).